We begin with the raw amino-acid sequence, 2641 residues long: Prosolanapyrone synthase (2641 aa).

One can recognise a Ketosynthase family 3 (KS3) domain in the interval 14–440 (PEPIAIVGMG…GANGHCIIDD (427 aa)). Residues Cys187, His323, and His363 each act as for beta-ketoacyl synthase activity in the active site. Positions 456–515 (SIGHINGHTNGHTNGHTNGHTNGHTNGHTNGHTNGAHASDGHNGHHQNGMNGNSASHMSE) are disordered. Low complexity predominate over residues 461–490 (NGHTNGHTNGHTNGHTNGHTNGHTNGHTNG). The malonyl-CoA:ACP transacylase (MAT) stretch occupies residues 619 to 920 (FVFTGQGAQW…KGPVGQISRS (302 aa)). The tract at residues 1011–1149 (HDLLGSKLPG…GRVRVIAGTS (139 aa)) is N-terminal hotdog fold. The tract at residues 1011-1309 (HDLLGSKLPG…GNLRCVTYTE (299 aa)) is dehydratase (DH) domain. Residues 1011-1313 (HDLLGSKLPG…CVTYTEVLPS (303 aa)) form the PKS/mFAS DH domain. His1043 acts as the Proton acceptor; for dehydratase activity in catalysis. A C-terminal hotdog fold region spans residues 1161-1313 (ARTLDTKAWY…CVTYTEVLPS (153 aa)). Asp1227 (proton donor; for dehydratase activity) is an active-site residue. The methyltransferase (MT) domain stretch occupies residues 1477–1665 (TGAYPQLVRF…GAELVLDDYP (189 aa)). The enoyl reductase (ER) domain stretch occupies residues 1894 to 2206 (GLLTSLYFKP…KGTHVGKLVV (313 aa)). The ketoreductase (KR) domain stretch occupies residues 2231-2408 (NYLITGGLGG…STVSFGLIRD (178 aa)). The region spanning 2561 to 2639 (RTVALVTDAI…ILANKIVDGA (79 aa)) is the Carrier domain. Ser2598 carries the post-translational modification O-(pantetheine 4'-phosphoryl)serine.

The protein operates within phytotoxin biosynthesis. Prosolanapyrone synthase; part of the gene cluster that mediates the biosynthesis of the phytotoxin solanapyrone, a causal agent of early blight disease of potato and tomato. The prosolanapyrone synthase sol1 is a polyketide synthase that produces the octaketide desmethylprosolanapyrone I via sequential condensations of 7 malonyl-CoA units with one acetyl-CoA unit, and one methylation step. The octaketide backbone is further methylated by the sol2 O-methyltransferase to yield prosolanapyrone I. Prosolanapyrone I is hydroxylated to prosolanapyrone II by the cytochrome P450 monooxygenase sol6. The solanapyrone synthase sol5 then catalyzes the oxidation of prosolanapyrone II and the subsequent Diels Alder cycloisomerization of the product prosolanapyrone III to solanapyrones A and D. Solanapyrones A and D are then converted into solanapyrones B and E, respectively, by the sol3 dehydrogenase. This is Prosolanapyrone synthase (sol1) from Alternaria solani.